A 172-amino-acid chain; its full sequence is Nicotinamide-nucleotide adenylyltransferase (172 aa).

Belongs to the archaeal NMN adenylyltransferase family.

The protein resides in the cytoplasm. The enzyme catalyses beta-nicotinamide D-ribonucleotide + ATP + H(+) = diphosphate + NAD(+). Its pathway is cofactor biosynthesis; NAD(+) biosynthesis; NAD(+) from nicotinamide D-ribonucleotide: step 1/1. This is Nicotinamide-nucleotide adenylyltransferase from Methanococcus vannielii (strain ATCC 35089 / DSM 1224 / JCM 13029 / OCM 148 / SB).